The chain runs to 959 residues: MQESDVFHNQLRVEMLKKEEDEVENNSEKKKAPGIDMNKVNLIKTRDEDIIAENIKAELKEEEKENMKVEEEEIKEEEEKKEKENYPCMQIIDQEGIFADENQKDRITFEEFIQENTKFKELGFNYNMLSILGPQNSGKSTLLNYLFDTDFAVLNEKNGRQRTTRGVWLGLVGDRKDIIIMDLEGSDGSIREDDLSFERKISLFSLSVCSVLMVNIWSHDVGRYGASNMSLLKNIFELNLQLFQKEDSPKTLILFVIRDRDQRKPFENTKSVLLEDIMKIWESVARPECFKRAPIDKFFDLEFTSLPHFKHDKELFIQEAKELKKRFDCKNQNTYFRPIYNKEIPADGLALFTKQVWSAIKSNKDLDLPSQKEMLARFRCDELIENIFNEFEKEIEEIKLQHSEKHIFNNFKIFCDCLYDKKMKEFMNVASKYLDRVVKEKADLLSEKMLNEISYLFQTQMTLAINYIKTMLTTSYFTLKNQYITEQSSLFDPTKYAGYAEQMDDFNSTIKNEWEKISTQSVPSNIENNFEIEINTLDRFINKLYEIGRRDLIEALMTHFKKHLQNIMKPLLLPLFEQSNQNMWEQVRKVVIETTSQNLQELENGMINSLKMNKDDVEKKLNELQVYIIDAVRSTILERPGFVSNLMENKFISIFRLDDEGLPKKWKQNEDLSKPFFKAKEEAEKILDLFSYIRMDPKDDELSFISINPATGKKMIIEEPENGTIDQTKVLFSLSERLSIYEGFQNMAESNFIRAQQELAAITVHSKTPMWLILLIAFLSFDNIVYVFKSPTLLALTLIIIGIIYSLNKIGYAYLIDSVISYILSISWSSVLYLIQDLGLFKNLLPKPEAPKRKRPQKKTQDDKPKSSILLTHKKQPSVMGDVTMDNIDSLNSFDDAFKLVSQDEKPIRKPLHPLPKRETQSMKVMPMSASFTKSQSMFIKRNPTTTSSLNKIKEANEF.

The Cytoplasmic portion of the chain corresponds to 1–767 (MQESDVFHNQ…ELAAITVHSK (767 aa)). The stretch at 9 to 86 (NQLRVEMLKK…EEEKKEKENY (78 aa)) forms a coiled coil. The segment at 62–81 (EEKENMKVEEEEIKEEEEKK) is disordered. The GB1/RHD3-type G domain maps to 123–340 (GFNYNMLSIL…NQNTYFRPIY (218 aa)). 133-140 (GPQNSGKS) is a GTP binding site. The helical transmembrane segment at 768-788 (TPMWLILLIAFLSFDNIVYVF) threads the bilayer. Residues 789–791 (KSP) lie on the Lumenal side of the membrane. The helical transmembrane segment at 792 to 812 (TLLALTLIIIGIIYSLNKIGY) threads the bilayer. The Cytoplasmic portion of the chain corresponds to 813–959 (AYLIDSVISY…LNKIKEANEF (147 aa)). The interval 849 to 868 (EAPKRKRPQKKTQDDKPKSS) is disordered.

Belongs to the TRAFAC class dynamin-like GTPase superfamily. GB1/RHD3 GTPase family. RHD3 subfamily.

The protein resides in the endoplasmic reticulum membrane. Its function is as follows. Probable GTP-binding protein that may be involved in cell development. This Entamoeba histolytica (strain ATCC 30459 / HM-1:IMSS / ABRM) protein is Protein SEY1 homolog 1.